A 327-amino-acid polypeptide reads, in one-letter code: Undecaprenyl-phosphate 4-deoxy-4-formamido-L-arabinose transferase (327 aa).

Topologically, residues 1–235 (MFDAAPIKKV…TCLTTTPLRL (235 aa)) are cytoplasmic. The helical transmembrane segment at 236-256 (LSLLGSVIAIGGFSLSVLLIV) threads the bilayer. Residues 257 to 269 (LRLALGPQWAAEG) lie on the Periplasmic side of the membrane. Residues 270–290 (VFMLFAVLFTFIGAQFIGMGL) traverse the membrane as a helical segment. Topologically, residues 291–327 (LGEYIGRIYNDVRARPRYFVQQVIYPESTSFTEESHQ) are cytoplasmic.

Belongs to the glycosyltransferase 2 family.

The protein resides in the cell inner membrane. It carries out the reaction UDP-4-deoxy-4-formamido-beta-L-arabinose + di-trans,octa-cis-undecaprenyl phosphate = 4-deoxy-4-formamido-alpha-L-arabinopyranosyl di-trans,octa-cis-undecaprenyl phosphate + UDP. It functions in the pathway glycolipid biosynthesis; 4-amino-4-deoxy-alpha-L-arabinose undecaprenyl phosphate biosynthesis; 4-amino-4-deoxy-alpha-L-arabinose undecaprenyl phosphate from UDP-4-deoxy-4-formamido-beta-L-arabinose and undecaprenyl phosphate: step 1/2. The protein operates within bacterial outer membrane biogenesis; lipopolysaccharide biosynthesis. In terms of biological role, catalyzes the transfer of 4-deoxy-4-formamido-L-arabinose from UDP to undecaprenyl phosphate. The modified arabinose is attached to lipid A and is required for resistance to polymyxin and cationic antimicrobial peptides. In Salmonella paratyphi A (strain ATCC 9150 / SARB42), this protein is Undecaprenyl-phosphate 4-deoxy-4-formamido-L-arabinose transferase.